A 462-amino-acid polypeptide reads, in one-letter code: MPKKARPAGDGKEQGPAPKQVKVEAACGPSSPLNFDSPSGLFESFISPIKTETFFKEFWEQKPLLIQRDDPALATYYQSLFRLSDLKSLCSWGIYYGRDVNVCRCVHGKKKVLNKDGRVHFLQLRQDFDQKRATIQFHQPQRFKDELWRIQEKLECYFGSLVGSNVYITPAGAQGLPPHYDDVEVFILQLEGEKHWRLYQPTVPLAREYSVEAEDRIGRPTHEFTLKPGDLLYFPRGTIHQADTPEGLAHSTHVTISTYQSSSWGDFLLDTISGLVFDTAKADVALRAGIPRQLLLQAESIAVATRLSGFLRMLADRLEGTKELPSADMKKDFAMNRLPPYYMGDRAKLVAPGGQLPGLDSTVRLQFRDHVVLTVGPYQDPSDETRGEMVYVYHSLRNRRDTHMMGNETESYGLRFPLSYMDALKQIWNSSAISVKDLKLTTDEEKQNLVLSLWTECLIQVV.

The tract at residues Met1–Glu24 is disordered. Residues Gln139–Thr271 enclose the JmjC domain. Fe cation contacts are provided by His179, Asp181, and His240. Ser308 carries the phosphoserine modification.

Belongs to the ROX family. MINA53 subfamily. Fe(2+) is required as a cofactor.

It localises to the nucleus. The protein localises to the nucleolus. The enzyme catalyses L-histidyl-[ribosomal protein uL15] + 2-oxoglutarate + O2 = (3S)-3-hydroxy-L-histidyl-[ribosomal protein uL15] + succinate + CO2. It carries out the reaction L-histidyl-[protein] + 2-oxoglutarate + O2 = (3S)-3-hydroxy-L-histidyl-[protein] + succinate + CO2. Oxygenase that can act as both a histone lysine demethylase and a ribosomal histidine hydroxylase. Is involved in the demethylation of trimethylated 'Lys-9' on histone H3 (H3K9me3), leading to an increase in ribosomal RNA expression. Also catalyzes the hydroxylation of 60S ribosomal protein L27a on 'His-39'. May play an important role in cell growth and survival. May be involved in ribosome biogenesis, most likely during the assembly process of pre-ribosomal particles. In Bos taurus (Bovine), this protein is Ribosomal oxygenase 2 (RIOX2).